A 116-amino-acid polypeptide reads, in one-letter code: UPF0102 protein Neut_1662 (116 aa).

Belongs to the UPF0102 family.

The protein is UPF0102 protein Neut_1662 of Nitrosomonas eutropha (strain DSM 101675 / C91 / Nm57).